Here is a 258-residue protein sequence, read N- to C-terminus: Deoxyribose-phosphate aldolase (258 aa).

The Proton donor/acceptor role is filled by aspartate 101. The active-site Schiff-base intermediate with acetaldehyde is lysine 166. The active-site Proton donor/acceptor is the lysine 200.

It belongs to the DeoC/FbaB aldolase family. DeoC type 2 subfamily.

The protein resides in the cytoplasm. It carries out the reaction 2-deoxy-D-ribose 5-phosphate = D-glyceraldehyde 3-phosphate + acetaldehyde. Its pathway is carbohydrate degradation; 2-deoxy-D-ribose 1-phosphate degradation; D-glyceraldehyde 3-phosphate and acetaldehyde from 2-deoxy-alpha-D-ribose 1-phosphate: step 2/2. Functionally, catalyzes a reversible aldol reaction between acetaldehyde and D-glyceraldehyde 3-phosphate to generate 2-deoxy-D-ribose 5-phosphate. This is Deoxyribose-phosphate aldolase from Haemophilus ducreyi (strain 35000HP / ATCC 700724).